Consider the following 521-residue polypeptide: Protein disulfide-isomerase A5 (521 aa).

A signal peptide spans 1–25 (MARVVPAWLLLPLAVWVVLPTWLSS). Thioredoxin domains lie at 136-263 (FLKD…NPQP), 274-386 (ADEG…NPES), and 387-508 (PPPP…TLRE). Disulfide bonds link Cys184-Cys187, Cys307-Cys310, and Cys428-Cys431. A Prevents secretion from ER motif is present at residues 518-521 (KEEL).

The protein belongs to the protein disulfide isomerase family.

The protein resides in the endoplasmic reticulum lumen. It catalyses the reaction Catalyzes the rearrangement of -S-S- bonds in proteins.. This Bos taurus (Bovine) protein is Protein disulfide-isomerase A5 (PDIA5).